A 175-amino-acid polypeptide reads, in one-letter code: Inorganic pyrophosphatase (175 aa).

Lysine 30, arginine 44, and tyrosine 56 together coordinate substrate. The Mg(2+) site is built by aspartate 66, aspartate 71, and aspartate 103. Tyrosine 142 contributes to the substrate binding site.

This sequence belongs to the PPase family. Homohexamer. The cofactor is Mg(2+).

The protein resides in the cytoplasm. The catalysed reaction is diphosphate + H2O = 2 phosphate + H(+). Catalyzes the hydrolysis of inorganic pyrophosphate (PPi) forming two phosphate ions. The sequence is that of Inorganic pyrophosphatase from Haemophilus ducreyi (strain 35000HP / ATCC 700724).